The following is a 641-amino-acid chain: Calpain-6 (641 aa).

Positions 26–343 (LFCDPTFLPE…FHKLNVCRNV (318 aa)) constitute a Calpain catalytic domain. Residues 344–495 (NNPVFGRKEL…IFSEVPVQLR (152 aa)) are domain III. One can recognise a C2 domain in the interval 498 to 621 (TLDMPKMSCW…YLRKKGGPTA (124 aa)).

The protein belongs to the peptidase C2 family. As to quaternary structure, interacts (via domain III) with microtubules. Interacts (via domain II) with ARHGEF2 (via the N-terminal zinc finger).

The protein localises to the cytoplasm. Its subcellular location is the perinuclear region. The protein resides in the cytoskeleton. It is found in the spindle. Microtubule-stabilizing protein that may be involved in the regulation of microtubule dynamics and cytoskeletal organization. May act as a regulator of RAC1 activity through interaction with ARHGEF2 to control lamellipodial formation and cell mobility. Does not seem to have protease activity as it has lost the active site residues. This is Calpain-6 (Capn6) from Mus musculus (Mouse).